The following is a 187-amino-acid chain: UPF0398 protein SAB1311c (187 aa).

It belongs to the UPF0398 family.

The polypeptide is UPF0398 protein SAB1311c (Staphylococcus aureus (strain bovine RF122 / ET3-1)).